Reading from the N-terminus, the 89-residue chain is Exodeoxyribonuclease 7 small subunit (89 aa).

The disordered stretch occupies residues 1 to 22 (MRKKSSSNKEETALHPPPENFE).

The protein belongs to the XseB family. In terms of assembly, heterooligomer composed of large and small subunits.

The protein resides in the cytoplasm. The catalysed reaction is Exonucleolytic cleavage in either 5'- to 3'- or 3'- to 5'-direction to yield nucleoside 5'-phosphates.. In terms of biological role, bidirectionally degrades single-stranded DNA into large acid-insoluble oligonucleotides, which are then degraded further into small acid-soluble oligonucleotides. This chain is Exodeoxyribonuclease 7 small subunit, found in Nitrosomonas europaea (strain ATCC 19718 / CIP 103999 / KCTC 2705 / NBRC 14298).